We begin with the raw amino-acid sequence, 389 residues long: Gastricsin (389 aa).

Residues 1 to 16 (MKWMVVALVCLQLLEA) form the signal peptide. The propeptide at 17–59 (KVTKVTLKKFKSIRENLREQGLLEDFLKTNHYDPAQKYHFGDF) is activation peptide. The Peptidase A1 domain occupies 73–386 (YFGEISIGTP…DMGNNRVGFA (314 aa)). The active site involves Asp-91. Disulfide bonds link Cys-104–Cys-109 and Cys-268–Cys-272. Asp-277 is an active-site residue. Cys-311 and Cys-344 are joined by a disulfide.

It belongs to the peptidase A1 family.

The protein resides in the secreted. It catalyses the reaction More restricted specificity than pepsin A, but shows preferential cleavage at Tyr-|-Xaa bonds. High activity on hemoglobin.. Its function is as follows. Hydrolyzes a variety of proteins. The polypeptide is Gastricsin (PGC) (Suncus murinus (Asian house shrew)).